A 427-amino-acid chain; its full sequence is UDP-N-acetylglucosamine 1-carboxyvinyltransferase (427 aa).

Residue 22 to 23 (KN) coordinates phosphoenolpyruvate. A UDP-N-acetyl-alpha-D-glucosamine-binding site is contributed by Arg-99. Residue Cys-123 is the Proton donor of the active site. Cys-123 is modified (2-(S-cysteinyl)pyruvic acid O-phosphothioketal). UDP-N-acetyl-alpha-D-glucosamine contacts are provided by residues 128 to 132 (RPIDL), Asp-313, and Ile-335.

Belongs to the EPSP synthase family. MurA subfamily.

It localises to the cytoplasm. It catalyses the reaction phosphoenolpyruvate + UDP-N-acetyl-alpha-D-glucosamine = UDP-N-acetyl-3-O-(1-carboxyvinyl)-alpha-D-glucosamine + phosphate. The protein operates within cell wall biogenesis; peptidoglycan biosynthesis. Its function is as follows. Cell wall formation. Adds enolpyruvyl to UDP-N-acetylglucosamine. The sequence is that of UDP-N-acetylglucosamine 1-carboxyvinyltransferase from Novosphingobium aromaticivorans (strain ATCC 700278 / DSM 12444 / CCUG 56034 / CIP 105152 / NBRC 16084 / F199).